Reading from the N-terminus, the 529-residue chain is UDP-glucuronosyltransferase 2B9 (529 aa).

A signal peptide spans 1–21 (MSVKWTSVILLIQLSFYFSSG). N67, N68, and N88 each carry an N-linked (GlcNAc...) asparagine glycan. A helical transmembrane segment spans residues 494–514 (IGFLLACVATVIFVIMKCCLF).

It belongs to the UDP-glycosyltransferase family.

It localises to the microsome membrane. The protein localises to the endoplasmic reticulum membrane. The catalysed reaction is glucuronate acceptor + UDP-alpha-D-glucuronate = acceptor beta-D-glucuronoside + UDP + H(+). Its function is as follows. UDPGT is of major importance in the conjugation and subsequent elimination of potentially toxic xenobiotics and endogenous compounds. This isozyme is active on C18, C19, and C21 steroids, bile acids, and several xenobiotics including eugenol, 1-naphthol, and p-nitrophenol. This Macaca fascicularis (Crab-eating macaque) protein is UDP-glucuronosyltransferase 2B9 (UGT2B9).